Here is a 314-residue protein sequence, read N- to C-terminus: tRNA-cytidine(32) 2-sulfurtransferase (314 aa).

Positions S58 to S63 match the PP-loop motif motif. [4Fe-4S] cluster is bound by residues C133, C136, and C224.

This sequence belongs to the TtcA family. Homodimer. Requires Mg(2+) as cofactor. It depends on [4Fe-4S] cluster as a cofactor.

The protein resides in the cytoplasm. The enzyme catalyses cytidine(32) in tRNA + S-sulfanyl-L-cysteinyl-[cysteine desulfurase] + AH2 + ATP = 2-thiocytidine(32) in tRNA + L-cysteinyl-[cysteine desulfurase] + A + AMP + diphosphate + H(+). Its pathway is tRNA modification. In terms of biological role, catalyzes the ATP-dependent 2-thiolation of cytidine in position 32 of tRNA, to form 2-thiocytidine (s(2)C32). The sulfur atoms are provided by the cysteine/cysteine desulfurase (IscS) system. The chain is tRNA-cytidine(32) 2-sulfurtransferase from Polaromonas naphthalenivorans (strain CJ2).